Reading from the N-terminus, the 345-residue chain is MADFWATSLGQTLILLAQGLGIIAFVMIGLLLLVWGDRKIWAAVQMRKGPNVVGAFGLLQSVADAAKYVFKEIVVPAGVDKPVYFLAPMLSLVLALLAWVVVPFNEGWVMADINVAVLFVFAVSSLEVYGVIMGGWASNSKYPFLGSLRSAAQMISYEVSMGLIIVGVIISTGSMNLSAIVEAQRGDFGLLNWYWLPHLPMVALFFISALAETNRPPFDLPEAESELVAGFMVEYSSTPYLLFMAGEYIAVWLMCALTSVLFFGGWLSPIPGVPDGVLWMVAKMAAVFFVFAMVKAIVPRYRYDQLMRIGWKVFLPLSLAWVVVVAFLAKFEVLGGFWARWSIGA.

At 1-15 (MADFWATSLGQTLIL) the chain is on the lumenal side. Residues 16-35 (LAQGLGIIAFVMIGLLLLVW) traverse the membrane as a helical segment. Residues 36–86 (GDRKIWAAVQMRKGPNVVGAFGLLQSVADAAKYVFKEIVVPAGVDKPVYFL) are Cytoplasmic-facing. The chain crosses the membrane as a helical span at residues 87-106 (APMLSLVLALLAWVVVPFNE). Topologically, residues 107–110 (GWVM) are lumenal. A helical membrane pass occupies residues 111–130 (ADINVAVLFVFAVSSLEVYG). Residues 131–156 (VIMGGWASNSKYPFLGSLRSAAQMIS) are Cytoplasmic-facing. Residues 157 to 176 (YEVSMGLIIVGVIISTGSMN) form a helical membrane-spanning segment. Residues 177–191 (LSAIVEAQRGDFGLL) are Lumenal-facing. Residues 192 to 211 (NWYWLPHLPMVALFFISALA) form a helical membrane-spanning segment. The Cytoplasmic segment spans residues 212–245 (ETNRPPFDLPEAESELVAGFMVEYSSTPYLLFMA). Residues 246-265 (GEYIAVWLMCALTSVLFFGG) form a helical membrane-spanning segment. Topologically, residues 266–276 (WLSPIPGVPDG) are lumenal. Residues 277 to 296 (VLWMVAKMAAVFFVFAMVKA) traverse the membrane as a helical segment. Residues 297–313 (IVPRYRYDQLMRIGWKV) lie on the Cytoplasmic side of the membrane. A helical transmembrane segment spans residues 314–333 (FLPLSLAWVVVVAFLAKFEV). Topologically, residues 334-345 (LGGFWARWSIGA) are lumenal.

The protein belongs to the complex I subunit 1 family. As to quaternary structure, NDH-1 is composed of 14 different subunits. Subunits NuoA, H, J, K, L, M, N constitute the membrane sector of the complex.

Its subcellular location is the cellular chromatophore membrane. The catalysed reaction is a quinone + NADH + 5 H(+)(in) = a quinol + NAD(+) + 4 H(+)(out). NDH-1 shuttles electrons from NADH, via FMN and iron-sulfur (Fe-S) centers, to quinones in the respiratory chain. The immediate electron acceptor for the enzyme in this species is believed to be ubiquinone. Couples the redox reaction to proton translocation (for every two electrons transferred, four hydrogen ions are translocated across the cytoplasmic membrane), and thus conserves the redox energy in a proton gradient. This subunit may bind ubiquinone. The sequence is that of NADH-quinone oxidoreductase subunit H from Rhodobacter capsulatus (Rhodopseudomonas capsulata).